Consider the following 368-residue polypeptide: Agmatine deiminase (368 aa).

The active-site Amidino-cysteine intermediate is C357.

The protein belongs to the agmatine deiminase family. Homodimer.

The catalysed reaction is agmatine + H2O = N-carbamoylputrescine + NH4(+). It participates in amine and polyamine biosynthesis; putrescine biosynthesis via agmatine pathway; N-carbamoylputrescine from agmatine: step 1/1. Its function is as follows. Mediates the hydrolysis of agmatine into N-carbamoylputrescine in the arginine decarboxylase (ADC) pathway of putrescine biosynthesis, a basic polyamine. The protein is Agmatine deiminase of Pseudomonas aeruginosa (strain LESB58).